The chain runs to 84 residues: Small ribosomal subunit protein bS18 (84 aa).

It belongs to the bacterial ribosomal protein bS18 family. In terms of assembly, part of the 30S ribosomal subunit. Forms a tight heterodimer with protein bS6.

In terms of biological role, binds as a heterodimer with protein bS6 to the central domain of the 16S rRNA, where it helps stabilize the platform of the 30S subunit. This is Small ribosomal subunit protein bS18 from Mycoplasma mobile (strain ATCC 43663 / 163K / NCTC 11711) (Mesomycoplasma mobile).